The chain runs to 334 residues: 3-dehydroquinate synthase (334 aa).

Belongs to the archaeal-type DHQ synthase family.

The enzyme catalyses 2-amino-2,3,7-trideoxy-D-lyxo-hept-6-ulosonate + NAD(+) + H2O = 3-dehydroquinate + NH4(+) + NADH + H(+). Catalyzes the oxidative deamination and cyclization of 2-amino-3,7-dideoxy-D-threo-hept-6-ulosonic acid (ADH) to yield 3-dehydroquinate (DHQ), which is fed into the canonical shikimic pathway of aromatic amino acid biosynthesis. In Korarchaeum cryptofilum (strain OPF8), this protein is 3-dehydroquinate synthase.